Consider the following 238-residue polypeptide: Isoprene-epoxide--glutathione S-transferase (238 aa).

The region spanning 7 to 82 (YVPAWGIPDI…YLKNKFGDKL (76 aa)) is the GST N-terminal domain. Residues 118–238 (DAGWETYIPF…LERIRKQYDI (121 aa)) enclose the GST C-terminal domain.

The protein belongs to the GST superfamily. As to quaternary structure, homodimer.

The catalysed reaction is 2-glutathionyl-2-methylbut-3-en-1-ol = (3R)-3,4-epoxy-3-methylbut-1-ene + glutathione. Its activity is regulated as follows. Activity is inhibited by 1,2-epoxyhexane. Functionally, involved in isoprene degradation. Catalyzes the glutathione-dependent ring opening of various epoxides. The highest conversion rate is observed with the physiological substrate, 3,4-epoxy-3-methyl-1-butene, which is the primary oxidation product of isoprene. It can also use other epoxides, including epoxyethane, epoxypropane, epithiopropane, epichlorohydrin, epifluorohydrin, epibromohydrin, 1,2-epoxybutane, 1,2-epoxyhexane, cis-2,3-epoxybutane, cis-1,2-dichloroepoxyethane and trans-1,2-dichloroepoxyethane. The protein is Isoprene-epoxide--glutathione S-transferase of Rhodococcus sp. (strain AD45).